The chain runs to 284 residues: Diaminopimelate epimerase (284 aa).

3 residues coordinate substrate: asparagine 20, glutamine 53, and asparagine 73. The active-site Proton donor is cysteine 82. Substrate is bound by residues 83 to 84 (GN), asparagine 167, asparagine 200, and 218 to 219 (ER). The active-site Proton acceptor is the cysteine 227. 228–229 (GS) is a substrate binding site.

It belongs to the diaminopimelate epimerase family. In terms of assembly, homodimer.

The protein localises to the cytoplasm. The enzyme catalyses (2S,6S)-2,6-diaminopimelate = meso-2,6-diaminopimelate. It participates in amino-acid biosynthesis; L-lysine biosynthesis via DAP pathway; DL-2,6-diaminopimelate from LL-2,6-diaminopimelate: step 1/1. Its function is as follows. Catalyzes the stereoinversion of LL-2,6-diaminopimelate (L,L-DAP) to meso-diaminopimelate (meso-DAP), a precursor of L-lysine and an essential component of the bacterial peptidoglycan. The chain is Diaminopimelate epimerase from Xanthomonas euvesicatoria pv. vesicatoria (strain 85-10) (Xanthomonas campestris pv. vesicatoria).